Consider the following 131-residue polypeptide: Large-conductance mechanosensitive channel (131 aa).

3 helical membrane-spanning segments follow: residues 8 to 28 (FAIR…GAFG), 30 to 50 (IVSS…LGGI), and 67 to 87 (GAFI…FLFV).

It belongs to the MscL family. As to quaternary structure, homopentamer.

Its subcellular location is the cell membrane. Functionally, channel that opens in response to stretch forces in the membrane lipid bilayer. May participate in the regulation of osmotic pressure changes within the cell. The sequence is that of Large-conductance mechanosensitive channel from Geobacillus thermodenitrificans (strain NG80-2).